We begin with the raw amino-acid sequence, 475 residues long: MSSGKVLQVIGPVVDVEFPLDEKLPEINDALKIKESDGKTLTTEVALELGDGVVRTIAMDGTDGLQRGMEVENTGASISVPVGDDTLGRVFNVLGEPVDNGPKFGPDAKRMPIHRDAPKYDDLNNATEILETGIKVIDLLAPYVRGGKIGLFGGAGVGKTVLIQELIHNIAQGHNGISVFTGVGERTREGNDMYYEMKASGVLEKTAMVYGQMNEPPGARMRVALTGLTIAEYFRDVKGQDVLLFIDNIFRFTQAGSEVSALLGRIPSAVGYQPTLATEMGQLQERITSTKKGSITSIQAVYVPADDYTDPAPATTFAHLDATTNLERRLTQIGIYPAVDPLASTSTALTPEIVGKEHYEVATQVQHVLQRYHELQDIISILGMDELSDEEKTIVARARRIQNFLSQSFSVASQFTGLPGKYVPLKETIKGFKEILAGKYDDLPEEAFRLVGPIEDVVEKAKKMKAETDEDSSED.

Position 153 to 160 (153 to 160 (GGAGVGKT)) interacts with ATP.

It belongs to the ATPase alpha/beta chains family. In terms of assembly, F-type ATPases have 2 components, CF(1) - the catalytic core - and CF(0) - the membrane proton channel. CF(1) has five subunits: alpha(3), beta(3), gamma(1), delta(1), epsilon(1). CF(0) has three main subunits: a(1), b(2) and c(9-12). The alpha and beta chains form an alternating ring which encloses part of the gamma chain. CF(1) is attached to CF(0) by a central stalk formed by the gamma and epsilon chains, while a peripheral stalk is formed by the delta and b chains.

It localises to the cell membrane. The enzyme catalyses ATP + H2O + 4 H(+)(in) = ADP + phosphate + 5 H(+)(out). Its function is as follows. Produces ATP from ADP in the presence of a proton gradient across the membrane. The catalytic sites are hosted primarily by the beta subunits. The chain is ATP synthase subunit beta from Limosilactobacillus reuteri (strain DSM 20016) (Lactobacillus reuteri).